A 101-amino-acid chain; its full sequence is Putative pterin-4-alpha-carbinolamine dehydratase (101 aa).

The protein belongs to the pterin-4-alpha-carbinolamine dehydratase family.

The catalysed reaction is (4aS,6R)-4a-hydroxy-L-erythro-5,6,7,8-tetrahydrobiopterin = (6R)-L-erythro-6,7-dihydrobiopterin + H2O. The protein is Putative pterin-4-alpha-carbinolamine dehydratase of Burkholderia mallei (strain ATCC 23344).